The chain runs to 445 residues: Methylenetetrahydrofolate--tRNA-(uracil-5-)-methyltransferase TrmFO (445 aa).

9–14 serves as a coordination point for FAD; sequence GGGLAG.

Belongs to the MnmG family. TrmFO subfamily. It depends on FAD as a cofactor.

Its subcellular location is the cytoplasm. It carries out the reaction uridine(54) in tRNA + (6R)-5,10-methylene-5,6,7,8-tetrahydrofolate + NADH + H(+) = 5-methyluridine(54) in tRNA + (6S)-5,6,7,8-tetrahydrofolate + NAD(+). The enzyme catalyses uridine(54) in tRNA + (6R)-5,10-methylene-5,6,7,8-tetrahydrofolate + NADPH + H(+) = 5-methyluridine(54) in tRNA + (6S)-5,6,7,8-tetrahydrofolate + NADP(+). Its function is as follows. Catalyzes the folate-dependent formation of 5-methyl-uridine at position 54 (M-5-U54) in all tRNAs. This chain is Methylenetetrahydrofolate--tRNA-(uracil-5-)-methyltransferase TrmFO, found in Aquifex aeolicus (strain VF5).